We begin with the raw amino-acid sequence, 468 residues long: Acetyl-CoA decarbonylase/synthase complex subunit gamma 1 (468 aa).

The 4Fe-4S domain maps to 1-61 (MKINSPLEAY…YAKKLAELDR (61 aa)). The [4Fe-4S] cluster site is built by Cys18, Cys21, Cys26, and Cys43.

As to quaternary structure, heterodimer of delta and gamma chains. The ACDS complex is made up of alpha, epsilon, beta, gamma and delta chains with a probable stoichiometry of (alpha(2)epsilon(2))(4)-beta(8)-(gamma(1)delta(1))(8). Corrinoid is required as a cofactor. The cofactor is [4Fe-4S] cluster.

The catalysed reaction is 5,6,7,8-tetrahydrosarcinapterin + methyl-Co(III)-[corrinoid Fe-S protein] = 5-methyltetrahydrosarcinapterin + Co(I)-[corrinoid Fe-S protein] + H(+). Its pathway is one-carbon metabolism; methanogenesis from acetate. Functionally, part of a complex that catalyzes the reversible cleavage of acetyl-CoA, allowing growth on acetate as sole source of carbon and energy. The protein is Acetyl-CoA decarbonylase/synthase complex subunit gamma 1 of Methanosarcina thermophila.